A 275-amino-acid chain; its full sequence is Ribosomal RNA small subunit methyltransferase A (275 aa).

S-adenosyl-L-methionine-binding residues include N20, L22, G47, E68, D90, and N110.

Belongs to the class I-like SAM-binding methyltransferase superfamily. rRNA adenine N(6)-methyltransferase family. RsmA subfamily.

It localises to the cytoplasm. It carries out the reaction adenosine(1518)/adenosine(1519) in 16S rRNA + 4 S-adenosyl-L-methionine = N(6)-dimethyladenosine(1518)/N(6)-dimethyladenosine(1519) in 16S rRNA + 4 S-adenosyl-L-homocysteine + 4 H(+). Functionally, specifically dimethylates two adjacent adenosines (A1518 and A1519) in the loop of a conserved hairpin near the 3'-end of 16S rRNA in the 30S particle. May play a critical role in biogenesis of 30S subunits. The protein is Ribosomal RNA small subunit methyltransferase A of Chlorobaculum tepidum (strain ATCC 49652 / DSM 12025 / NBRC 103806 / TLS) (Chlorobium tepidum).